The primary structure comprises 356 residues: GMP reductase (356 aa).

NADP(+)-binding positions include 26–27, K78, 132–134, and 183–184; these read SR, DVA, and IG. Residues G184, G186, and C189 each coordinate K(+). C189 serves as the catalytic Thioimidate intermediate. The active-site Proton donor/acceptor is the T191. K(+) is bound at residue R192. GMP is bound by residues 222-224, 245-246, 271-273, and 289-293; these read DGG, GG, GMS, and RASEG. Residues M272, 288 to 289, and 317 to 320 contribute to the NADP(+) site; these read YR and SACT.

The protein belongs to the IMPDH/GMPR family.

The catalysed reaction is IMP + NH4(+) + NADP(+) = GMP + NADPH + 2 H(+). In terms of biological role, catalyzes the irreversible NADPH-dependent deamination of GMP to IMP. It functions in the conversion of nucleobase, nucleoside and nucleotide derivatives of G to A nucleotides, and in maintaining the intracellular balance of A and G nucleotides. This Ascaris suum (Pig roundworm) protein is GMP reductase.